A 340-amino-acid polypeptide reads, in one-letter code: Ketol-acid reductoisomerase (NADP(+)) (340 aa).

A KARI N-terminal Rossmann domain is found at 1–183 (MAITVYYDKD…GGGRTGIIET (183 aa)). Residues 26-29 (FGSQ), arginine 49, serine 52, serine 54, and 84-87 (DEIQ) contribute to the NADP(+) site. Residue histidine 109 is part of the active site. Glycine 135 is a binding site for NADP(+). A KARI C-terminal knotted domain is found at 184 to 329 (TFKAETETDL…RNLRAMMPWI (146 aa)). Aspartate 192, glutamate 196, glutamate 228, and glutamate 232 together coordinate Mg(2+). Serine 253 is a substrate binding site.

The protein belongs to the ketol-acid reductoisomerase family. Mg(2+) serves as cofactor.

The enzyme catalyses (2R)-2,3-dihydroxy-3-methylbutanoate + NADP(+) = (2S)-2-acetolactate + NADPH + H(+). The catalysed reaction is (2R,3R)-2,3-dihydroxy-3-methylpentanoate + NADP(+) = (S)-2-ethyl-2-hydroxy-3-oxobutanoate + NADPH + H(+). Its pathway is amino-acid biosynthesis; L-isoleucine biosynthesis; L-isoleucine from 2-oxobutanoate: step 2/4. It functions in the pathway amino-acid biosynthesis; L-valine biosynthesis; L-valine from pyruvate: step 2/4. Involved in the biosynthesis of branched-chain amino acids (BCAA). Catalyzes an alkyl-migration followed by a ketol-acid reduction of (S)-2-acetolactate (S2AL) to yield (R)-2,3-dihydroxy-isovalerate. In the isomerase reaction, S2AL is rearranged via a Mg-dependent methyl migration to produce 3-hydroxy-3-methyl-2-ketobutyrate (HMKB). In the reductase reaction, this 2-ketoacid undergoes a metal-dependent reduction by NADPH to yield (R)-2,3-dihydroxy-isovalerate. The polypeptide is Ketol-acid reductoisomerase (NADP(+)) (Campylobacter jejuni subsp. jejuni serotype O:23/36 (strain 81-176)).